Here is a 229-residue protein sequence, read N- to C-terminus: Dephospho-CoA kinase (229 aa).

Residues 3-203 (TVGLTGGIGS…ARRDAKATAK (201 aa)) enclose the DPCK domain. 11–16 (GSGKSA) provides a ligand contact to ATP. The interval 203 to 229 (KATAKAETVASGTDTAASGTDTAAPAG) is disordered.

Belongs to the CoaE family.

Its subcellular location is the cytoplasm. The enzyme catalyses 3'-dephospho-CoA + ATP = ADP + CoA + H(+). The protein operates within cofactor biosynthesis; coenzyme A biosynthesis; CoA from (R)-pantothenate: step 5/5. In terms of biological role, catalyzes the phosphorylation of the 3'-hydroxyl group of dephosphocoenzyme A to form coenzyme A. This chain is Dephospho-CoA kinase, found in Frankia casuarinae (strain DSM 45818 / CECT 9043 / HFP020203 / CcI3).